The primary structure comprises 61 residues: Short neurotoxin 2 (61 aa).

4 disulfide bridges follow: Cys-3–Cys-23, Cys-17–Cys-40, Cys-42–Cys-53, and Cys-54–Cys-59.

It belongs to the three-finger toxin family. Short-chain subfamily. Type I alpha-neurotoxin sub-subfamily. Expressed by the venom gland.

It is found in the secreted. Binds to muscle nicotinic acetylcholine receptor (nAChR) and inhibit acetylcholine from binding to the receptor, thereby impairing neuromuscular transmission. This Naja nivea (Cape cobra) protein is Short neurotoxin 2.